A 336-amino-acid polypeptide reads, in one-letter code: Fructose-1,6-bisphosphatase class 1 (336 aa).

Mg(2+) contacts are provided by Glu-90, Asp-112, Leu-114, and Asp-115. Residues 115 to 118 (DGSS), Asn-211, and Lys-277 contribute to the substrate site. A Mg(2+)-binding site is contributed by Glu-283.

This sequence belongs to the FBPase class 1 family. As to quaternary structure, homotetramer. The cofactor is Mg(2+).

It is found in the cytoplasm. The catalysed reaction is beta-D-fructose 1,6-bisphosphate + H2O = beta-D-fructose 6-phosphate + phosphate. It participates in carbohydrate biosynthesis; gluconeogenesis. In Stutzerimonas stutzeri (strain A1501) (Pseudomonas stutzeri), this protein is Fructose-1,6-bisphosphatase class 1.